Consider the following 387-residue polypeptide: Probable purine permease 6 (387 aa).

The disordered stretch occupies residues 1–24 (MMELESETQELHLHVNGEPEGKFS). A compositionally biased stretch (basic and acidic residues) spans 9 to 24 (QELHLHVNGEPEGKFS). Transmembrane regions (helical) follow at residues 36 to 56 (LRVSLYVTLLLAGETIATLLG), 68 to 88 (WLETLVQLVGFPLTLPCYYYL), 106 to 126 (FLTLSLVYIGLGLLVAGHCIL), 129 to 149 (FGLLYLPVSTFSLISASQLAF), 162 to 182 (ITPFILNSLVLLTISSTLLVI), 201 to 221 (YVIGYICAVGSSAGYSLVLSL), 238 to 258 (ILDMATYPSMVATCVVVVGLF), 283 to 303 (INIGSTISWQACLIGSVGLII), 309 to 329 (FSNVISTLCLPVVPVLAVVFF), and 333 to 353 (MSGIKLVAMFLAIWGFVSYGY). The interval 362–387 (PEEDQELPQSKEEEEQKQVDTIHVQA) is disordered. Over residues 370-381 (QSKEEEEQKQVD) the composition is skewed to basic and acidic residues.

It belongs to the purine permeases (TC 2.A.7.14) family.

It is found in the membrane. In Arabidopsis thaliana (Mouse-ear cress), this protein is Probable purine permease 6 (PUP6).